A 421-amino-acid chain; its full sequence is Histidine--tRNA ligase (421 aa).

This sequence belongs to the class-II aminoacyl-tRNA synthetase family. Homodimer.

It is found in the cytoplasm. The catalysed reaction is tRNA(His) + L-histidine + ATP = L-histidyl-tRNA(His) + AMP + diphosphate + H(+). The polypeptide is Histidine--tRNA ligase (Coxiella burnetii (strain CbuG_Q212) (Coxiella burnetii (strain Q212))).